The primary structure comprises 127 residues: Large ribosomal subunit protein bL19 (127 aa).

This sequence belongs to the bacterial ribosomal protein bL19 family.

In terms of biological role, this protein is located at the 30S-50S ribosomal subunit interface and may play a role in the structure and function of the aminoacyl-tRNA binding site. The sequence is that of Large ribosomal subunit protein bL19 from Acidovorax ebreus (strain TPSY) (Diaphorobacter sp. (strain TPSY)).